Here is a 242-residue protein sequence, read N- to C-terminus: Demethylmenaquinone methyltransferase (242 aa).

S-adenosyl-L-methionine is bound by residues Thr62, Asp83, and 112–113 (DV).

This sequence belongs to the class I-like SAM-binding methyltransferase superfamily. MenG/UbiE family.

It catalyses the reaction a 2-demethylmenaquinol + S-adenosyl-L-methionine = a menaquinol + S-adenosyl-L-homocysteine + H(+). Its pathway is quinol/quinone metabolism; menaquinone biosynthesis; menaquinol from 1,4-dihydroxy-2-naphthoate: step 2/2. Its function is as follows. Methyltransferase required for the conversion of demethylmenaquinol (DMKH2) to menaquinol (MKH2). The polypeptide is Demethylmenaquinone methyltransferase (Protochlamydia amoebophila (strain UWE25)).